The sequence spans 413 residues: MADSSSFPGTNPFLKVSTKDDKYSPIQKISEEEEYEVTSPTDPTFRSAHSGATAPTAGNSFNGDNGSNEGGEGIQFNRPFDAGFGQGSEGQGEHVEPPGGARPTAAANQGFPNNYALGRRTSVSAESLNPTSAGSDSWTPPCHPKTEEQLSRLKTAVSNNFLFSHLDDDQFRTVLDALVEKPIPAKDIKVISQGDAGDYFYIVENGHFDVYINPAGSVQPGPDGIGNKVSTIGPGGSFGELALMYNAPRAATIVSADPKSTLWALDRITFRRILMDSAFQRRRMYEAFLEEVPLLSSLKPYERAKIADALDAIKYPAGSTIIEEGAPGDAFYLLESGEAEAFKKDVEGPVKSYRRGDFFGELALLDDKPRAASVVAKTDVKVARLGRDGFKRLLGPVEDIMRRAEYSAKPSPS.

Residues 1–145 are disordered; that stretch reads MADSSSFPGT…DSWTPPCHPK (145 aa). The interval 24 to 161 is dimerization and phosphorylation; that stretch reads SPIQKISEEE…RLKTAVSNNF (138 aa). A compositionally biased stretch (low complexity) spans 58 to 67; the sequence is GNSFNGDNGS. Polar residues predominate over residues 121 to 138; sequence TSVSAESLNPTSAGSDSW. Ser-122 bears the Phosphoserine mark. 3',5'-cyclic AMP-binding positions include 162 to 291, Glu-240, Arg-249, 294 to 413, Glu-361, and Arg-370; these read LFSH…FLEE and LLSS…PSPS.

The protein belongs to the cAMP-dependent kinase regulatory chain family. In terms of assembly, tetramer, composed of 2 regulatory (R) and 2 catalytic (C) subunits. In the presence of cAMP it dissociates into 2 active monomeric C subunits and an R dimer.

This is cAMP-dependent protein kinase regulatory subunit (pkaR) from Aspergillus fumigatus (strain ATCC MYA-4609 / CBS 101355 / FGSC A1100 / Af293) (Neosartorya fumigata).